The chain runs to 581 residues: Arginine--tRNA ligase (581 aa).

A 'HIGH' region motif is present at residues 131-141 (ANPTGPLHVGH).

Belongs to the class-I aminoacyl-tRNA synthetase family. As to quaternary structure, monomer.

It is found in the cytoplasm. The catalysed reaction is tRNA(Arg) + L-arginine + ATP = L-arginyl-tRNA(Arg) + AMP + diphosphate. In Nitrosospira multiformis (strain ATCC 25196 / NCIMB 11849 / C 71), this protein is Arginine--tRNA ligase.